Consider the following 418-residue polypeptide: Glutamyl-tRNA reductase (418 aa).

Substrate is bound by residues 49–52, S109, 114–116, and Q120; these read TCNR and EPQ. C50 functions as the Nucleophile in the catalytic mechanism. 189-194 contributes to the NADP(+) binding site; sequence GAGETI.

The protein belongs to the glutamyl-tRNA reductase family. In terms of assembly, homodimer.

The enzyme catalyses (S)-4-amino-5-oxopentanoate + tRNA(Glu) + NADP(+) = L-glutamyl-tRNA(Glu) + NADPH + H(+). It participates in porphyrin-containing compound metabolism; protoporphyrin-IX biosynthesis; 5-aminolevulinate from L-glutamyl-tRNA(Glu): step 1/2. Functionally, catalyzes the NADPH-dependent reduction of glutamyl-tRNA(Glu) to glutamate 1-semialdehyde (GSA). The chain is Glutamyl-tRNA reductase from Escherichia coli O139:H28 (strain E24377A / ETEC).